The sequence spans 298 residues: Urease accessory protein UreD (298 aa).

It belongs to the UreD family. As to quaternary structure, ureD, UreF and UreG form a complex that acts as a GTP-hydrolysis-dependent molecular chaperone, activating the urease apoprotein by helping to assemble the nickel containing metallocenter of UreC. The UreE protein probably delivers the nickel.

Its subcellular location is the cytoplasm. Functionally, required for maturation of urease via the functional incorporation of the urease nickel metallocenter. In Marinobacter nauticus (strain ATCC 700491 / DSM 11845 / VT8) (Marinobacter aquaeolei), this protein is Urease accessory protein UreD.